A 357-amino-acid polypeptide reads, in one-letter code: ATP-dependent 6-phosphofructokinase 2 (357 aa).

ATP-binding positions include G12, 80 to 81, and 107 to 110; these read KG and GDGS. Position 108 (D108) interacts with Mg(2+). Residues 131 to 133, R168, 175 to 177, E229, R272, and 278 to 281 each bind substrate; these read TID, MGR, and HIQR. D133 acts as the Proton acceptor in catalysis.

The protein belongs to the phosphofructokinase type A (PFKA) family. Mixed-substrate PFK group III subfamily. As to quaternary structure, homodimer or homotetramer. The cofactor is Mg(2+).

It is found in the cytoplasm. It catalyses the reaction beta-D-fructose 6-phosphate + ATP = beta-D-fructose 1,6-bisphosphate + ADP + H(+). The protein operates within carbohydrate degradation; glycolysis; D-glyceraldehyde 3-phosphate and glycerone phosphate from D-glucose: step 3/4. With respect to regulation, subject to allosteric activation by ADP and other diphosphonucleosides, and inhibition by phosphoenolpyruvate. Functionally, catalyzes the phosphorylation of D-fructose 6-phosphate to fructose 1,6-bisphosphate by ATP, the first committing step of glycolysis. In Nostoc sp. (strain PCC 7120 / SAG 25.82 / UTEX 2576), this protein is ATP-dependent 6-phosphofructokinase 2.